The sequence spans 225 residues: MSNETNCTLDFEQSVELFKEYNLFITAFLLFLTIILQYGYATRSKFIYILKMIVLWCFWPLNIAVGVISCIYPPNTGGLVAAIILTVFACLSFVGYWIQSIRLFKRCRSWWSFNPESNAVGSILLTNGQQCNFAIESVPTVLSPIIKNGFLYCEGQWLAKCEPDHLPKDIFVCTPDRRNIYRMVQKYTGDQSGNKKRFATFVYAKQSVDTGELESVATGGSSLYT.

At 1 to 20 the chain is on the virion surface side; it reads MSNETNCTLDFEQSVELFKE. A helical transmembrane segment spans residues 21–41; sequence YNLFITAFLLFLTIILQYGYA. At 42 to 51 the chain is on the intravirion side; sequence TRSKFIYILK. The helical transmembrane segment at 52-72 threads the bilayer; it reads MIVLWCFWPLNIAVGVISCIY. Over 73–77 the chain is Virion surface; it reads PPNTG. Residues 78-98 form a helical membrane-spanning segment; it reads GLVAAIILTVFACLSFVGYWI. Residues 99 to 225 lie on the Intravirion side of the membrane; it reads QSIRLFKRCR…VATGGSSLYT (127 aa).

It belongs to the gammacoronaviruses M protein family. As to quaternary structure, homomultimer. Interacts with envelope E protein in the budding compartment of the host cell, which is located between endoplasmic reticulum and the Golgi complex. Forms a complex with HE and S proteins. Interacts with nucleocapsid N protein. This interaction probably participates in RNA packaging into the virus.

It is found in the virion membrane. Its subcellular location is the host Golgi apparatus membrane. Its function is as follows. Component of the viral envelope that plays a central role in virus morphogenesis and assembly via its interactions with other viral proteins. This is Membrane protein from Gallus gallus (Chicken).